The primary structure comprises 126 residues: Apolipoprotein C-IV (126 aa).

The first 27 residues, 1-27 (MSLLRHRLQALPSLCLCVLVLACIGAC), serve as a signal peptide directing secretion.

Belongs to the apolipoprotein C4 family.

The protein resides in the secreted. Functionally, may participate in lipoprotein metabolism. The polypeptide is Apolipoprotein C-IV (APOC4) (Aotus nancymaae (Ma's night monkey)).